The primary structure comprises 520 residues: ADP,ATP carrier protein 4 (520 aa).

The next 12 membrane-spanning stretches (helical) occupy residues Leu-43–Ile-63, Ile-80–Val-100, Ile-111–Phe-131, Phe-166–Trp-186, Phe-201–Glu-221, Phe-240–Ile-260, Leu-305–Lys-325, Ala-339–Leu-359, Phe-370–Val-390, Leu-399–Ile-419, Leu-462–Ser-482, and Ser-485–Val-505.

The protein belongs to the ADP/ATP translocase tlc family.

It localises to the cell membrane. In terms of biological role, provides the rickettsial cell with host ATP in exchange for rickettsial ADP. This is an obligate exchange system. This energy acquiring activity is an important component of rickettsial parasitism. The chain is ADP,ATP carrier protein 4 (tlcD) from Rickettsia bellii (strain RML369-C).